Here is a 180-residue protein sequence, read N- to C-terminus: MFPMVTGFMSYGQQTIRATRYIGQSFITTLSHTNRLPITIHYPYEKSITPERFRGRIHFEFDKCIACEVCVRVCPIDLPVVDWRFEKDIKRKQLLNYSIDFGVCIFCGNCVEYCPTSCLSMTEEYELSTYDRHELNYNQIALSRLPISIMGDYTIQTIRNSSESKINKEKSSNSRTITDY.

4Fe-4S ferredoxin-type domains follow at residues 55–84 and 95–124; these read GRIHFEFDKCIACEVCVRVCPIDLPVVDWR and LNYSIDFGVCIFCGNCVEYCPTSCLSMTEE. 8 residues coordinate [4Fe-4S] cluster: cysteine 64, cysteine 67, cysteine 70, cysteine 74, cysteine 104, cysteine 107, cysteine 110, and cysteine 114.

It belongs to the complex I 23 kDa subunit family. NDH is composed of at least 16 different subunits, 5 of which are encoded in the nucleus. Requires [4Fe-4S] cluster as cofactor.

It localises to the plastid. Its subcellular location is the chloroplast thylakoid membrane. The catalysed reaction is a plastoquinone + NADH + (n+1) H(+)(in) = a plastoquinol + NAD(+) + n H(+)(out). It catalyses the reaction a plastoquinone + NADPH + (n+1) H(+)(in) = a plastoquinol + NADP(+) + n H(+)(out). Its function is as follows. NDH shuttles electrons from NAD(P)H:plastoquinone, via FMN and iron-sulfur (Fe-S) centers, to quinones in the photosynthetic chain and possibly in a chloroplast respiratory chain. The immediate electron acceptor for the enzyme in this species is believed to be plastoquinone. Couples the redox reaction to proton translocation, and thus conserves the redox energy in a proton gradient. The sequence is that of NAD(P)H-quinone oxidoreductase subunit I, chloroplastic from Triticum aestivum (Wheat).